Reading from the N-terminus, the 188-residue chain is Methylated-DNA--protein-cysteine methyltransferase (188 aa).

The DNA site is built by tyrosine 120, glycine 121, and arginine 134. The active-site Nucleophile; methyl group acceptor is the cysteine 151. Residue serine 157 coordinates DNA.

The protein belongs to the MGMT family.

The protein localises to the nucleus. The catalysed reaction is a 6-O-methyl-2'-deoxyguanosine in DNA + L-cysteinyl-[protein] = S-methyl-L-cysteinyl-[protein] + a 2'-deoxyguanosine in DNA. It carries out the reaction a 4-O-methyl-thymidine in DNA + L-cysteinyl-[protein] = a thymidine in DNA + S-methyl-L-cysteinyl-[protein]. Its function is as follows. Involved in the cellular defense against the biological effects of O6-methylguanine (O6-MeG) and O4-methylthymine (O4-MeT) in DNA. Repairs the methylated nucleobase in DNA by stoichiometrically transferring the methyl group to a cysteine residue in the enzyme. This is a suicide reaction: the enzyme is irreversibly inactivated. Prefers double-stranded DNA over single-stranded DNA as substrate. This chain is Methylated-DNA--protein-cysteine methyltransferase (MGT1), found in Saccharomyces cerevisiae (strain ATCC 204508 / S288c) (Baker's yeast).